Here is a 342-residue protein sequence, read N- to C-terminus: MKVDLFDFHLPEELIAQTPLPDRAASRLMVLDKRTGAIRHETFRNIISYLNPGDCLVLNDTRVMPARLYGEKEETGGTVEVLLLKQLDGDRWETLVKPGKRVKPGTKLTFGEGKLEAVCLDTLEHGGRVLEFSYDGLFYEVLAELGEMPLPPYIKEKLDDPERYQTVYAREIGSAAAPTAGLHFTEELLDAIREKGVHIVFITLHVGLGTFRPVQVDDVEKHDMHAEFYQMSEETAETLNRVREQGGRIIAVGTTSTRTLETIAGKHNGRFVAESGWTDIFIYPGYEFKGIDGLVTNFHLPKSTLIMLVSALAGRENILHAYQVAVKERYRFFSFGDAMLII.

This sequence belongs to the QueA family. In terms of assembly, monomer.

Its subcellular location is the cytoplasm. The enzyme catalyses 7-aminomethyl-7-carbaguanosine(34) in tRNA + S-adenosyl-L-methionine = epoxyqueuosine(34) in tRNA + adenine + L-methionine + 2 H(+). It functions in the pathway tRNA modification; tRNA-queuosine biosynthesis. Functionally, transfers and isomerizes the ribose moiety from AdoMet to the 7-aminomethyl group of 7-deazaguanine (preQ1-tRNA) to give epoxyqueuosine (oQ-tRNA). This is S-adenosylmethionine:tRNA ribosyltransferase-isomerase from Geobacillus kaustophilus (strain HTA426).